A 212-amino-acid chain; its full sequence is Protein irg-1 (212 aa).

As to expression, expressed in the intestine.

Its function is as follows. Plays a role in innate immunity by conferring resistance to virulent strains of the Gram-negative bacterium P.aeruginosa via the zip-2 pathway. Can act independently of several immunity-related pathways including pmk-1 p38MAPK, dbl-1 TGF-beta, kgb-1 JNK and bar-1/beta-catenin pathways. The polypeptide is Protein irg-1 (Caenorhabditis elegans).